Consider the following 518-residue polypeptide: MERNIIVLDTTLRDGEQVPGAKLNVQQKIEFAQQLKRLNVDIIEAGFPASSAGDFQAVQEIARTVGDSVSITALARAVKGDIDAVYESIKLAQNPLIHIVLGTSNIHVEKKFNRSKDAVLQMGVDAVKYAKTLLPQVQYSTEDASRSDFEYLWKTIEAVVKAGATMINVPDTVGYAVPDEFGELIRKINERLKNLNDQVILSVHCHNDLGLATANTLSAVRNGAEKVECTINGLGERAGNTSLEEVVMGLKVRENHFKASTNVRLKELIRTSRLLTHLTGLDVQVNKAITGENAFAHSSGIHQDGLLKDKQVYEIMSPEEVGADSMELILTARSGRHAFKNAVEKLGFETGEGDDFEALFEKFLLLADAKKEVYDHDVFYLVTQHRTHEEVSSHLYELDSFQVVTNDMYPTATVKLKKGSETFRDSMVGDGPIDALYSAIKALVGLDVQLKDYKINSLSRGKEAIGRVNIRIEYQGKIYSGRAMDTDIIKASALAFLNGINAVLLDAGHDSQAPVSAR.

Positions isoleucine 5–isoleucine 269 constitute a Pyruvate carboxyltransferase domain. The Mn(2+) site is built by aspartate 14, histidine 204, histidine 206, and asparagine 240. The regulatory domain stretch occupies residues glutamate 397–arginine 518.

This sequence belongs to the alpha-IPM synthase/homocitrate synthase family. LeuA type 1 subfamily. Homodimer. Requires Mn(2+) as cofactor.

The protein resides in the cytoplasm. It carries out the reaction 3-methyl-2-oxobutanoate + acetyl-CoA + H2O = (2S)-2-isopropylmalate + CoA + H(+). Its pathway is amino-acid biosynthesis; L-leucine biosynthesis; L-leucine from 3-methyl-2-oxobutanoate: step 1/4. Catalyzes the condensation of the acetyl group of acetyl-CoA with 3-methyl-2-oxobutanoate (2-ketoisovalerate) to form 3-carboxy-3-hydroxy-4-methylpentanoate (2-isopropylmalate). The chain is 2-isopropylmalate synthase from Geobacillus sp. (strain Y412MC10).